The primary structure comprises 239 residues: Uridylate kinase (239 aa).

Position 10-13 (10-13) interacts with ATP; that stretch reads KISG. Residues 18-23 are involved in allosteric activation by GTP; sequence GESGYG. Glycine 52 is a binding site for UMP. ATP is bound by residues glycine 53 and arginine 57. Residues aspartate 72 and 133-140 contribute to the UMP site; that span reads TGNPYFTT. Threonine 160, tyrosine 166, and aspartate 169 together coordinate ATP.

This sequence belongs to the UMP kinase family. In terms of assembly, homohexamer.

The protein localises to the cytoplasm. The enzyme catalyses UMP + ATP = UDP + ADP. The protein operates within pyrimidine metabolism; CTP biosynthesis via de novo pathway; UDP from UMP (UMPK route): step 1/1. Its activity is regulated as follows. Allosterically activated by GTP. Inhibited by UTP. Catalyzes the reversible phosphorylation of UMP to UDP. The sequence is that of Uridylate kinase from Chlorobaculum tepidum (strain ATCC 49652 / DSM 12025 / NBRC 103806 / TLS) (Chlorobium tepidum).